The following is a 370-amino-acid chain: Cytochrome b (370 aa).

Transmembrane regions (helical) follow at residues 25 to 45, 69 to 90, 105 to 125, and 170 to 190; these read FGSMLLACLTLQLLTGFFLAV, WMMQNLHAIGASMFFICIYIHI, WFSGTTLLIMLMATAFFGYVL, and FFALHFILPFGIISLSSLHIL. Heme b is bound by residues His-75 and His-89. 2 residues coordinate heme b: His-174 and His-188. Position 193 (His-193) interacts with a ubiquinone. 4 consecutive transmembrane segments (helical) span residues 218–238, 280–300, 312–332, and 339–358; these read YKDMLMLTIMTIMLLTIVSFF, LGGALALTMSIMMLLTLPFTH, FMQLTFWTFTATFLVISWTAT, and FTTISQVAALMYFLFFISNP.

It belongs to the cytochrome b family. The cytochrome bc1 complex contains 3 respiratory subunits (MT-CYB, CYC1 and UQCRFS1), 2 core proteins (UQCRC1 and UQCRC2) and probably 6 low-molecular weight proteins. Requires heme b as cofactor.

It localises to the mitochondrion inner membrane. Component of the ubiquinol-cytochrome c reductase complex (complex III or cytochrome b-c1 complex) that is part of the mitochondrial respiratory chain. The b-c1 complex mediates electron transfer from ubiquinol to cytochrome c. Contributes to the generation of a proton gradient across the mitochondrial membrane that is then used for ATP synthesis. The sequence is that of Cytochrome b (MT-CYB) from Chilabothrus strigilatus mccraniei (Ragged Island boa constrictor).